The sequence spans 187 residues: Orotate phosphoribosyltransferase (187 aa).

110–118 (EDVVTTGGS) lines the 5-phospho-alpha-D-ribose 1-diphosphate pocket. Orotate contacts are provided by Thr-114 and Arg-142.

The protein belongs to the purine/pyrimidine phosphoribosyltransferase family. PyrE subfamily. In terms of assembly, homodimer. Requires Mg(2+) as cofactor.

The catalysed reaction is orotidine 5'-phosphate + diphosphate = orotate + 5-phospho-alpha-D-ribose 1-diphosphate. It participates in pyrimidine metabolism; UMP biosynthesis via de novo pathway; UMP from orotate: step 1/2. In terms of biological role, catalyzes the transfer of a ribosyl phosphate group from 5-phosphoribose 1-diphosphate to orotate, leading to the formation of orotidine monophosphate (OMP). This chain is Orotate phosphoribosyltransferase, found in Thermotoga maritima (strain ATCC 43589 / DSM 3109 / JCM 10099 / NBRC 100826 / MSB8).